Reading from the N-terminus, the 239-residue chain is Pyrroloquinoline-quinone synthase (239 aa).

This sequence belongs to the PqqC family.

The catalysed reaction is 6-(2-amino-2-carboxyethyl)-7,8-dioxo-1,2,3,4,7,8-hexahydroquinoline-2,4-dicarboxylate + 3 O2 = pyrroloquinoline quinone + 2 H2O2 + 2 H2O + H(+). The protein operates within cofactor biosynthesis; pyrroloquinoline quinone biosynthesis. Functionally, ring cyclization and eight-electron oxidation of 3a-(2-amino-2-carboxyethyl)-4,5-dioxo-4,5,6,7,8,9-hexahydroquinoline-7,9-dicarboxylic-acid to PQQ. This chain is Pyrroloquinoline-quinone synthase, found in Gluconobacter oxydans (strain 621H) (Gluconobacter suboxydans).